Consider the following 530-residue polypeptide: Sugar transport protein MST6 (530 aa).

Residues 1–18 (MAGGVVVNNGGGKDYPGK) lie on the Cytoplasmic side of the membrane. The helical transmembrane segment at 19 to 39 (LTMFVLFACIVAATGGLIFGY) threads the bilayer. Topologically, residues 40-81 (DIGISGGVTSMNPFLIKFFPSVYRKEQAAEKNQSNQYCKFDS) are extracellular. Residues 82–102 (PLLTMFTSSLYLAALVASFFA) form a helical membrane-spanning segment. Over 103 to 119 (STVTRVAGRKWSMFGGG) the chain is Cytoplasmic. The helical transmembrane segment at 120-140 (VTFLVGAALNGAAKNVLMLIL) threads the bilayer. At 141–142 (GR) the chain is on the extracellular side. Residues 143–163 (VLLGVGVGFANQSVPLYLSEM) traverse the membrane as a helical segment. Residues 164–169 (APARLR) are Cytoplasmic-facing. A helical transmembrane segment spans residues 170–190 (GMLNIGFQLMITIGILCANLI). Over 191-204 (NYGTAKIKGGWGWR) the chain is Extracellular. A helical membrane pass occupies residues 205–225 (VSLALAAVPAAIIAVGALFLP). The Cytoplasmic portion of the chain corresponds to 226 to 291 (DTPNSLIDRG…YRPQLTMAIA (66 aa)). The helical transmembrane segment at 292-312 (IPLFQQLTGINVIMFYAPVLF) threads the bilayer. Topologically, residues 313–323 (KTLGFADDASL) are extracellular. A helical membrane pass occupies residues 324-344 (MSAVITGLVNVFATFVSIVTV). Residues 345–359 (DRLGRRKLFLQGGTQ) lie on the Cytoplasmic side of the membrane. Residues 360 to 380 (MLACQIVVGSLIGAKFGFSGV) form a helical membrane-spanning segment. At 381–388 (ADIPKAYA) the chain is on the extracellular side. Residues 389–409 (AFVVLFICAYVAGFAWSWGPL) form a helical membrane-spanning segment. Residues 410–428 (GWLVPSEIFPLEIRSAGQS) lie on the Cytoplasmic side of the membrane. Residues 429-449 (INVSVNMLFTFIIAQAFLPML) traverse the membrane as a helical segment. At 450–453 (CRFK) the chain is on the extracellular side. The chain crosses the membrane as a helical span at residues 454–474 (FILFFFFGAWVVIMTLFVAFF). Residues 475 to 530 (LPETKNVPIEEMVLVWKSHWYWGRFIRDEDVHVGADVEMPAAGNRNGKVDPAKLAN) are Cytoplasmic-facing.

The protein belongs to the major facilitator superfamily. Sugar transporter (TC 2.A.1.1) family. Expressed in leaf blades, leaf sheaths, anthers, ovaries and embryos. Expressed at low levels in roots and shoots.

The protein localises to the cell membrane. In terms of biological role, mediates active uptake of hexoses by sugar:proton symport. Can transport glucose, fructose, mannose, galactose, xylose and ribose. The protein is Sugar transport protein MST6 of Oryza sativa subsp. japonica (Rice).